Reading from the N-terminus, the 283-residue chain is Formamidopyrimidine-DNA glycosylase (283 aa).

Residue Pro-2 is the Schiff-base intermediate with DNA of the active site. The active-site Proton donor is Glu-3. Lys-58 (proton donor; for beta-elimination activity) is an active-site residue. 3 residues coordinate DNA: His-100, Arg-119, and Arg-162. The FPG-type zinc-finger motif lies at 247 to 283 (DVYGREGEPCRRAGCTGTVTRITQSGRSSFYCGKCQR). Residue Arg-273 is the Proton donor; for delta-elimination activity of the active site.

This sequence belongs to the FPG family. Monomer. Zn(2+) serves as cofactor.

It catalyses the reaction Hydrolysis of DNA containing ring-opened 7-methylguanine residues, releasing 2,6-diamino-4-hydroxy-5-(N-methyl)formamidopyrimidine.. The enzyme catalyses 2'-deoxyribonucleotide-(2'-deoxyribose 5'-phosphate)-2'-deoxyribonucleotide-DNA = a 3'-end 2'-deoxyribonucleotide-(2,3-dehydro-2,3-deoxyribose 5'-phosphate)-DNA + a 5'-end 5'-phospho-2'-deoxyribonucleoside-DNA + H(+). Involved in base excision repair of DNA damaged by oxidation or by mutagenic agents. Acts as a DNA glycosylase that recognizes and removes damaged bases. Has a preference for oxidized purines, such as 7,8-dihydro-8-oxoguanine (8-oxoG). Has AP (apurinic/apyrimidinic) lyase activity and introduces nicks in the DNA strand. Cleaves the DNA backbone by beta-delta elimination to generate a single-strand break at the site of the removed base with both 3'- and 5'-phosphates. This Ruegeria sp. (strain TM1040) (Silicibacter sp.) protein is Formamidopyrimidine-DNA glycosylase.